A 339-amino-acid chain; its full sequence is DNA-directed RNA polymerase subunit alpha (339 aa).

Residues 1–238 (MVDPIVTKNW…EQLSIFINFD (238 aa)) form an alpha N-terminal domain (alpha-NTD) region. The alpha C-terminal domain (alpha-CTD) stretch occupies residues 255-339 (LNENLFRSVD…KAAPQGAPKV (85 aa)).

The protein belongs to the RNA polymerase alpha chain family. Homodimer. The RNAP catalytic core consists of 2 alpha, 1 beta, 1 beta' and 1 omega subunit. When a sigma factor is associated with the core the holoenzyme is formed, which can initiate transcription.

The catalysed reaction is RNA(n) + a ribonucleoside 5'-triphosphate = RNA(n+1) + diphosphate. Its function is as follows. DNA-dependent RNA polymerase catalyzes the transcription of DNA into RNA using the four ribonucleoside triphosphates as substrates. The protein is DNA-directed RNA polymerase subunit alpha of Anaeromyxobacter sp. (strain Fw109-5).